Here is a 504-residue protein sequence, read N- to C-terminus: Anaerobic nitric oxide reductase transcription regulator NorR (504 aa).

4-aspartylphosphate is present on aspartate 57. The Sigma-54 factor interaction domain maps to 187–416 (MIGLSPGMTQ…LEHAIHRAVV (230 aa)). ATP-binding positions include 215–222 (GETGTGKE) and 278–287 (ADNGTLFLDE). The H-T-H motif DNA-binding region spans 479-498 (WAACARMLETDVANLHRLAK).

It participates in nitrogen metabolism; nitric oxide reduction. Functionally, required for the expression of anaerobic nitric oxide (NO) reductase, acts as a transcriptional activator for at least the norVW operon. Activation also requires sigma-54. The polypeptide is Anaerobic nitric oxide reductase transcription regulator NorR (Escherichia coli (strain K12 / MC4100 / BW2952)).